Consider the following 179-residue polypeptide: Signal peptidase complex subunit 3 (179 aa).

Residues M1 to V12 are Cytoplasmic-facing. Residues A13–L33 traverse the membrane as a helical; Signal-anchor for type II membrane protein segment. Over D34–I179 the chain is Lumenal. 2 N-linked (GlcNAc...) asparagine glycosylation sites follow: N73 and N141.

The protein belongs to the SPCS3 family. Component of the signal peptidase complex (SPC) composed of a catalytic subunit twr/SEC11 and three accessory subunits Spase12/SPCS1, Spase25/SPCS2 and Spase22-23/SPCS3. The complex induces a local thinning of the ER membrane which is used to measure the length of the signal peptide (SP) h-region of protein substrates. This ensures the selectivity of the complex towards h-regions shorter than 18-20 amino acids.

Its subcellular location is the endoplasmic reticulum membrane. Functionally, essential component of the signal peptidase complex (SPC) which catalyzes the cleavage of N-terminal signal sequences from nascent proteins as they are translocated into the lumen of the endoplasmic reticulum. Essential for the SPC catalytic activity, possibly by stabilizing and positioning the active center of the complex close to the lumenal surface. Its function is as follows. (Microbial infection) Plays an important role in infection by flaviviruses such as West Nile virus and Dengue virus type 2. The protein is Signal peptidase complex subunit 3 (Spase22-23) of Drosophila melanogaster (Fruit fly).